The sequence spans 328 residues: 4-hydroxythreonine-4-phosphate dehydrogenase (328 aa).

Residue Thr-125 participates in substrate binding. His-160, His-203, and His-269 together coordinate a divalent metal cation. 3 residues coordinate substrate: Lys-277, Asn-286, and Arg-295.

The protein belongs to the PdxA family. As to quaternary structure, homodimer. It depends on a divalent metal cation as a cofactor.

The protein localises to the cytoplasm. The enzyme catalyses 4-(phosphooxy)-L-threonine + NAD(+) = 3-amino-2-oxopropyl phosphate + CO2 + NADH. Its pathway is cofactor biosynthesis; pyridoxine 5'-phosphate biosynthesis; pyridoxine 5'-phosphate from D-erythrose 4-phosphate: step 4/5. Functionally, catalyzes the NAD(P)-dependent oxidation of 4-(phosphooxy)-L-threonine (HTP) into 2-amino-3-oxo-4-(phosphooxy)butyric acid which spontaneously decarboxylates to form 3-amino-2-oxopropyl phosphate (AHAP). This chain is 4-hydroxythreonine-4-phosphate dehydrogenase, found in Synechococcus sp. (strain RCC307).